Consider the following 253-residue polypeptide: Glutamate racemase (253 aa).

Substrate is bound by residues 7 to 8 (DS) and 39 to 40 (YG). Catalysis depends on Cys-70, which acts as the Proton donor/acceptor. 71–72 (NS) contributes to the substrate binding site. The Proton donor/acceptor role is filled by Cys-179. Residue 180-181 (TH) coordinates substrate.

This sequence belongs to the aspartate/glutamate racemases family.

The enzyme catalyses L-glutamate = D-glutamate. The protein operates within cell wall biogenesis; peptidoglycan biosynthesis. Its function is as follows. Provides the (R)-glutamate required for cell wall biosynthesis. The sequence is that of Glutamate racemase from Nitratiruptor sp. (strain SB155-2).